The sequence spans 228 residues: L-ribulose-5-phosphate 4-epimerase UlaF (228 aa).

Residues 26–27, 43–44, and 72–73 contribute to the substrate site; these read GN, SG, and SS. Residues Asp-74, His-93, and His-95 each contribute to the Zn(2+) site. Asp-118 (proton donor/acceptor) is an active-site residue. A Zn(2+)-binding site is contributed by His-167. Tyr-225 (proton donor/acceptor) is an active-site residue.

It belongs to the aldolase class II family. AraD/FucA subfamily. Requires Zn(2+) as cofactor.

The enzyme catalyses L-ribulose 5-phosphate = D-xylulose 5-phosphate. It functions in the pathway cofactor degradation; L-ascorbate degradation; D-xylulose 5-phosphate from L-ascorbate: step 4/4. Its function is as follows. Catalyzes the isomerization of L-ribulose 5-phosphate to D-xylulose 5-phosphate. Is involved in the anaerobic L-ascorbate utilization. This is L-ribulose-5-phosphate 4-epimerase UlaF from Escherichia coli O17:K52:H18 (strain UMN026 / ExPEC).